The following is a 212-amino-acid chain: Pyrrolidone-carboxylate peptidase (212 aa).

Active-site residues include glutamate 80, cysteine 143, and histidine 165.

This sequence belongs to the peptidase C15 family. Homotetramer.

The protein resides in the cytoplasm. It carries out the reaction Release of an N-terminal pyroglutamyl group from a polypeptide, the second amino acid generally not being Pro.. In terms of biological role, removes 5-oxoproline from various penultimate amino acid residues except L-proline. The chain is Pyrrolidone-carboxylate peptidase from Vibrio vulnificus (strain YJ016).